The chain runs to 147 residues: Protein MC014 (147 aa).

The protein localises to the host nucleus. The protein is Protein MC014 (MC014) of Homo sapiens (Human).